The following is a 100-amino-acid chain: Urease subunit gamma 2 (100 aa).

The protein belongs to the urease gamma subunit family. As to quaternary structure, heterotrimer of UreA (gamma), UreB (beta) and UreC (alpha) subunits. Three heterotrimers associate to form the active enzyme.

The protein resides in the cytoplasm. The catalysed reaction is urea + 2 H2O + H(+) = hydrogencarbonate + 2 NH4(+). Its pathway is nitrogen metabolism; urea degradation; CO(2) and NH(3) from urea (urease route): step 1/1. The chain is Urease subunit gamma 2 from Psychrobacter cryohalolentis (strain ATCC BAA-1226 / DSM 17306 / VKM B-2378 / K5).